The chain runs to 601 residues: Aspartate--tRNA(Asp/Asn) ligase (601 aa).

Glu174 is an L-aspartate binding site. The segment at 198–201 is aspartate; the sequence is QLFK. Position 220 (Arg220) interacts with L-aspartate. Residues 220–222 and Gln229 contribute to the ATP site; that span reads RDE. An L-aspartate-binding site is contributed by His459. Glu493 contributes to the ATP binding site. Arg500 is an L-aspartate binding site. Residue 545–548 coordinates ATP; that stretch reads GLDR.

Belongs to the class-II aminoacyl-tRNA synthetase family. Type 1 subfamily. Homodimer.

The protein resides in the cytoplasm. The catalysed reaction is tRNA(Asx) + L-aspartate + ATP = L-aspartyl-tRNA(Asx) + AMP + diphosphate. Its function is as follows. Aspartyl-tRNA synthetase with relaxed tRNA specificity since it is able to aspartylate not only its cognate tRNA(Asp) but also tRNA(Asn). Reaction proceeds in two steps: L-aspartate is first activated by ATP to form Asp-AMP and then transferred to the acceptor end of tRNA(Asp/Asn). The chain is Aspartate--tRNA(Asp/Asn) ligase from Variovorax paradoxus (strain S110).